The following is a 197-amino-acid chain: uncharacterized protein (197 aa).

Residues 150–172 form a helical membrane-spanning segment; that stretch reads SLKLNTTLPMFALNLICLLRSIL.

The protein resides in the membrane. This is an uncharacterized protein from Saccharomyces cerevisiae (strain ATCC 204508 / S288c) (Baker's yeast).